Reading from the N-terminus, the 292-residue chain is Elongation factor Ts (292 aa).

An involved in Mg(2+) ion dislocation from EF-Tu region spans residues 80 to 83; sequence TDFV.

The protein belongs to the EF-Ts family.

The protein resides in the cytoplasm. Associates with the EF-Tu.GDP complex and induces the exchange of GDP to GTP. It remains bound to the aminoacyl-tRNA.EF-Tu.GTP complex up to the GTP hydrolysis stage on the ribosome. The protein is Elongation factor Ts of Ralstonia pickettii (strain 12J).